The sequence spans 127 residues: Small ribosomal subunit protein uS13 (127 aa).

Over residues Leu96 to Val118 the composition is skewed to basic residues. The interval Leu96 to Arg127 is disordered.

This sequence belongs to the universal ribosomal protein uS13 family. As to quaternary structure, part of the 30S ribosomal subunit. Forms a loose heterodimer with protein S19. Forms two bridges to the 50S subunit in the 70S ribosome.

Functionally, located at the top of the head of the 30S subunit, it contacts several helices of the 16S rRNA. In the 70S ribosome it contacts the 23S rRNA (bridge B1a) and protein L5 of the 50S subunit (bridge B1b), connecting the 2 subunits; these bridges are implicated in subunit movement. Contacts the tRNAs in the A and P-sites. The polypeptide is Small ribosomal subunit protein uS13 (Myxococcus xanthus (strain DK1622)).